Reading from the N-terminus, the 70-residue chain is Small ribosomal subunit protein bS21B (70 aa).

It belongs to the bacterial ribosomal protein bS21 family.

This is Small ribosomal subunit protein bS21B from Paraburkholderia xenovorans (strain LB400).